Reading from the N-terminus, the 290-residue chain is Phosphatidylserine decarboxylase proenzyme (290 aa).

Catalysis depends on charge relay system; for autoendoproteolytic cleavage activity residues aspartate 96, histidine 153, and serine 257. The active-site Schiff-base intermediate with substrate; via pyruvic acid; for decarboxylase activity is serine 257. Serine 257 is modified (pyruvic acid (Ser); by autocatalysis).

The protein belongs to the phosphatidylserine decarboxylase family. PSD-B subfamily. Prokaryotic type I sub-subfamily. As to quaternary structure, heterodimer of a large membrane-associated beta subunit and a small pyruvoyl-containing alpha subunit. Pyruvate is required as a cofactor. Is synthesized initially as an inactive proenzyme. Formation of the active enzyme involves a self-maturation process in which the active site pyruvoyl group is generated from an internal serine residue via an autocatalytic post-translational modification. Two non-identical subunits are generated from the proenzyme in this reaction, and the pyruvate is formed at the N-terminus of the alpha chain, which is derived from the carboxyl end of the proenzyme. The autoendoproteolytic cleavage occurs by a canonical serine protease mechanism, in which the side chain hydroxyl group of the serine supplies its oxygen atom to form the C-terminus of the beta chain, while the remainder of the serine residue undergoes an oxidative deamination to produce ammonia and the pyruvoyl prosthetic group on the alpha chain. During this reaction, the Ser that is part of the protease active site of the proenzyme becomes the pyruvoyl prosthetic group, which constitutes an essential element of the active site of the mature decarboxylase.

The protein localises to the cell membrane. It catalyses the reaction a 1,2-diacyl-sn-glycero-3-phospho-L-serine + H(+) = a 1,2-diacyl-sn-glycero-3-phosphoethanolamine + CO2. It functions in the pathway phospholipid metabolism; phosphatidylethanolamine biosynthesis; phosphatidylethanolamine from CDP-diacylglycerol: step 2/2. Functionally, catalyzes the formation of phosphatidylethanolamine (PtdEtn) from phosphatidylserine (PtdSer). This Haemophilus influenzae (strain 86-028NP) protein is Phosphatidylserine decarboxylase proenzyme.